Here is a 748-residue protein sequence, read N- to C-terminus: LPS-assembly protein LptD (748 aa).

A signal peptide spans 1–19 (MSKTWGILMLSVLSAPSLA).

The protein belongs to the LptD family. Component of the lipopolysaccharide transport and assembly complex. Interacts with LptE and LptA.

The protein localises to the cell outer membrane. Functionally, together with LptE, is involved in the assembly of lipopolysaccharide (LPS) at the surface of the outer membrane. The protein is LPS-assembly protein LptD of Pseudoalteromonas translucida (strain TAC 125).